The sequence spans 404 residues: Tryptophan synthase beta chain (404 aa).

N6-(pyridoxal phosphate)lysine is present on Lys-94.

This sequence belongs to the TrpB family. In terms of assembly, tetramer of two alpha and two beta chains. The cofactor is pyridoxal 5'-phosphate.

The enzyme catalyses (1S,2R)-1-C-(indol-3-yl)glycerol 3-phosphate + L-serine = D-glyceraldehyde 3-phosphate + L-tryptophan + H2O. Its pathway is amino-acid biosynthesis; L-tryptophan biosynthesis; L-tryptophan from chorismate: step 5/5. In terms of biological role, the beta subunit is responsible for the synthesis of L-tryptophan from indole and L-serine. This chain is Tryptophan synthase beta chain, found in Staphylococcus aureus (strain bovine RF122 / ET3-1).